The sequence spans 485 residues: MASKKIRTRFAPSPTGYMHVGNLRTALYAYLIAKHEAGDFILRIEDTDQERLVDGAVDIIYNTLKLTGLNHDEGPDVGGEVGPYVQSERKAIYLEYAKNLVEKGEAYYCFCSKDRLDMLKENAEALKRPFKYDKHCLHLTKEEIEANLAKGLPYVIRQNNPTTGSTTFDDVIYGKITVDNSELEDMILIKSDGLPTYNFANVVDDHLMGITHVVRGNEYLSSSPKYNRLYEAFGWDVPIYVHCPPIMKDTHHKLSKRNGDASFEDLIQKGYLKEAVLNYIALLGWNPGTNEEIFSLEELTEKFDFKDISKSPAIFDDAKLKWMNGEYIRKLSLDEFHELAVPEYKKVLKKDFDLKFISDLLHTRCELLSDLADQIDFLEELPEYSTDLYVHKKMKSTVESSLENLEKVLPIIEEIDETNWNKDYIHEKVFELIKSLEIKNGQMLWPIRTALSGKSFTPGGAFELAILLGKEESISRLKKGIELLK.

The short motif at 12–22 (PSPTGYMHVGN) is the 'HIGH' region element. Zn(2+) is bound by residues Cys109, Cys111, Cys136, and His138. Residues 253-257 (KLSKR) carry the 'KMSKS' region motif. Position 256 (Lys256) interacts with ATP.

Belongs to the class-I aminoacyl-tRNA synthetase family. Glutamate--tRNA ligase type 1 subfamily. As to quaternary structure, monomer. It depends on Zn(2+) as a cofactor.

The protein resides in the cytoplasm. The enzyme catalyses tRNA(Glu) + L-glutamate + ATP = L-glutamyl-tRNA(Glu) + AMP + diphosphate. In terms of biological role, catalyzes the attachment of glutamate to tRNA(Glu) in a two-step reaction: glutamate is first activated by ATP to form Glu-AMP and then transferred to the acceptor end of tRNA(Glu). This is Glutamate--tRNA ligase from Clostridium botulinum (strain Eklund 17B / Type B).